The primary structure comprises 404 residues: Acetate kinase (404 aa).

A Mg(2+)-binding site is contributed by asparagine 7. Lysine 14 contacts ATP. Arginine 98 is a binding site for substrate. Catalysis depends on aspartate 155, which acts as the Proton donor/acceptor. Residues 214-218 (HLGNG), 289-291 (DLR), and 337-341 (GIGEN) each bind ATP. Glutamate 390 serves as a coordination point for Mg(2+).

It belongs to the acetokinase family. As to quaternary structure, homodimer. Mg(2+) serves as cofactor. Mn(2+) is required as a cofactor.

The protein localises to the cytoplasm. The enzyme catalyses acetate + ATP = acetyl phosphate + ADP. It functions in the pathway metabolic intermediate biosynthesis; acetyl-CoA biosynthesis; acetyl-CoA from acetate: step 1/2. Functionally, catalyzes the formation of acetyl phosphate from acetate and ATP. Can also catalyze the reverse reaction. The protein is Acetate kinase of Rippkaea orientalis (strain PCC 8801 / RF-1) (Cyanothece sp. (strain PCC 8801)).